Consider the following 209-residue polypeptide: MTRRLWDISPAVQAASPVFPGDTAYSQQWCATIGPGCPVNVSAITLSPHVGAHADAPLHYDADGASIGNVDLDAFLGPCRVIHAIGKGPLVEWEHIAHAVEHLPARVLVRTYGRAPTTWDQELAAYAPATVERLADLGVKLIGIDTASIDPASSKSLDSHQVIRRRGLRVLENLVLDEVAEGDYELIALPLKLVEADASPVRAVLRALA.

Position 19 (Phe19) interacts with substrate. Zn(2+)-binding residues include His49, His53, and Asp55. His59 functions as the Proton donor/acceptor in the catalytic mechanism. His160 and Glu172 together coordinate Zn(2+).

This sequence belongs to the Cyclase 1 superfamily. KynB family. Homodimer. Zn(2+) is required as a cofactor.

The catalysed reaction is N-formyl-L-kynurenine + H2O = L-kynurenine + formate + H(+). It functions in the pathway amino-acid degradation; L-tryptophan degradation via kynurenine pathway; L-kynurenine from L-tryptophan: step 2/2. Its function is as follows. Catalyzes the hydrolysis of N-formyl-L-kynurenine to L-kynurenine, the second step in the kynurenine pathway of tryptophan degradation. This chain is Kynurenine formamidase, found in Delftia acidovorans (strain DSM 14801 / SPH-1).